The chain runs to 306 residues: UDP-3-O-acyl-N-acetylglucosamine deacetylase (306 aa).

Residues His79, His238, and Asp242 each contribute to the Zn(2+) site. The active-site Proton donor is His265.

It belongs to the LpxC family. Zn(2+) serves as cofactor.

The catalysed reaction is a UDP-3-O-[(3R)-3-hydroxyacyl]-N-acetyl-alpha-D-glucosamine + H2O = a UDP-3-O-[(3R)-3-hydroxyacyl]-alpha-D-glucosamine + acetate. Its pathway is glycolipid biosynthesis; lipid IV(A) biosynthesis; lipid IV(A) from (3R)-3-hydroxytetradecanoyl-[acyl-carrier-protein] and UDP-N-acetyl-alpha-D-glucosamine: step 2/6. Its function is as follows. Catalyzes the hydrolysis of UDP-3-O-myristoyl-N-acetylglucosamine to form UDP-3-O-myristoylglucosamine and acetate, the committed step in lipid A biosynthesis. The sequence is that of UDP-3-O-acyl-N-acetylglucosamine deacetylase from Shewanella sp. (strain ANA-3).